The chain runs to 678 residues: Protein KHNYN (678 aa).

Position 10 is a phosphoserine (Ser-10). Disordered stretches follow at residues 222 to 251 (QGVRAPPSDGRESLDTGSMGPGDCRGARGD) and 347 to 407 (LHNG…ARGG). The segment covering 355–367 (PRVPSPPPAPEPP) has biased composition (pro residues). Residue Ser-359 is modified to Phosphoserine. Over residues 370–388 (CGDRGDCGDRGDVGDRGDK) the composition is skewed to basic and acidic residues. An RNase NYN domain is found at 437–589 (LRHIVIDGSN…LGRNGPTLDE (153 aa)). The disordered stretch occupies residues 595–633 (ARTQGSSKAQHPSRGFAEHGKQQQGREEEKGSGGIRKTR). The segment covering 610–633 (FAEHGKQQQGREEEKGSGGIRKTR) has biased composition (basic and acidic residues).

This sequence belongs to the N4BP1 family.

In Homo sapiens (Human), this protein is Protein KHNYN (KHNYN).